A 257-amino-acid chain; its full sequence is Phosphate import ATP-binding protein PstB (257 aa).

The 242-residue stretch at 5–246 folds into the ABC transporter domain; sequence LEIKDLTAFY…EVIFTSPKNE (242 aa). 37-44 contacts ATP; that stretch reads GPSGCGKS.

This sequence belongs to the ABC transporter superfamily. Phosphate importer (TC 3.A.1.7) family. In terms of assembly, the complex is composed of two ATP-binding proteins (PstB), two transmembrane proteins (PstC and PstA) and a solute-binding protein (PstS).

Its subcellular location is the cell membrane. The catalysed reaction is phosphate(out) + ATP + H2O = ADP + 2 phosphate(in) + H(+). In terms of biological role, part of the ABC transporter complex PstSACB involved in phosphate import. Responsible for energy coupling to the transport system. This is Phosphate import ATP-binding protein PstB from Tropheryma whipplei (strain TW08/27) (Whipple's bacillus).